The chain runs to 724 residues: Acyl-coenzyme A oxidase 2 (724 aa).

Positions 1-48 are disordered; it reads MAMLSQPNDGHDHPEKKDPDTTPKQVAGVISSQDPPHPAKDVAEERAR. Basic and acidic residues-rich tracts occupy residues 9-21 and 37-48; these read DGHD…DPDT and HPAKDVAEERAR.

Belongs to the acyl-CoA oxidase family. It depends on FAD as a cofactor.

It localises to the peroxisome. It catalyses the reaction a 2,3-saturated acyl-CoA + O2 = a (2E)-enoyl-CoA + H2O2. The protein operates within lipid metabolism; peroxisomal fatty acid beta-oxidation. The polypeptide is Acyl-coenzyme A oxidase 2 (POX2) (Candida tropicalis (Yeast)).